Here is a 364-residue protein sequence, read N- to C-terminus: Spermidine/putrescine import ATP-binding protein PotA (364 aa).

An ABC transporter domain is found at 5-235 (LSLKSVSKSY…PVNRFVADFI (231 aa)). Residue 37–44 (GPSGCGKT) coordinates ATP.

This sequence belongs to the ABC transporter superfamily. Spermidine/putrescine importer (TC 3.A.1.11.1) family. The complex is composed of two ATP-binding proteins (PotA), two transmembrane proteins (PotB and PotC) and a solute-binding protein (PotD).

It localises to the cell membrane. The catalysed reaction is ATP + H2O + polyamine-[polyamine-binding protein]Side 1 = ADP + phosphate + polyamineSide 2 + [polyamine-binding protein]Side 1.. Its function is as follows. Part of the ABC transporter complex PotABCD involved in spermidine/putrescine import. Responsible for energy coupling to the transport system. This chain is Spermidine/putrescine import ATP-binding protein PotA, found in Staphylococcus aureus (strain USA300).